The following is a 377-amino-acid chain: Nitric oxide reductase FlRd-NAD(+) reductase (377 aa).

This sequence belongs to the FAD-dependent oxidoreductase family. Requires FAD as cofactor.

The protein resides in the cytoplasm. The enzyme catalyses 2 reduced [nitric oxide reductase rubredoxin domain] + NAD(+) + H(+) = 2 oxidized [nitric oxide reductase rubredoxin domain] + NADH. It participates in nitrogen metabolism; nitric oxide reduction. One of at least two accessory proteins for anaerobic nitric oxide (NO) reductase. Reduces the rubredoxin moiety of NO reductase. The chain is Nitric oxide reductase FlRd-NAD(+) reductase from Salmonella typhi.